A 274-amino-acid polypeptide reads, in one-letter code: Putative HTH-type transcriptional regulator RmpR (274 aa).

The region spanning 18-88 (IERADAIVER…RSGGTFVVNQ (71 aa)) is the HTH gntR-type domain. A DNA-binding region (H-T-H motif) is located at residues 46–65 (EAALSEMFGVGGATLREALS). The span at 250-265 (SRPSSPATAPDGSSSA) shows a compositional bias: polar residues. The disordered stretch occupies residues 250–274 (SRPSSPATAPDGSSSAEAAMIQEGQ).

Functionally, may regulate the transcription of the rmpAB operon. This Mycobacterium gastri protein is Putative HTH-type transcriptional regulator RmpR (rmpR).